The following is a 390-amino-acid chain: 23S rRNA (uracil(747)-C(5))-methyltransferase RlmC (390 aa).

[4Fe-4S] cluster-binding residues include Cys12, Cys20, Cys23, and Cys100. 4 residues coordinate S-adenosyl-L-methionine: Gln225, Phe254, Glu275, and Asn322. Cys349 serves as the catalytic Nucleophile.

It belongs to the class I-like SAM-binding methyltransferase superfamily. RNA M5U methyltransferase family. RlmC subfamily.

It catalyses the reaction uridine(747) in 23S rRNA + S-adenosyl-L-methionine = 5-methyluridine(747) in 23S rRNA + S-adenosyl-L-homocysteine + H(+). Its function is as follows. Catalyzes the formation of 5-methyl-uridine at position 747 (m5U747) in 23S rRNA. This chain is 23S rRNA (uracil(747)-C(5))-methyltransferase RlmC, found in Shewanella baltica (strain OS185).